The primary structure comprises 481 residues: Proton-coupled amino acid transporter 2 (481 aa).

Residues 1–56 lie on the Cytoplasmic side of the membrane; the sequence is MSVTKSAGSPQVAATVKLDLVSFPESAKKVQSQDPNPVNGSSSESSEKTKGITGFQ. The segment at 26-49 is disordered; the sequence is SAKKVQSQDPNPVNGSSSESSEKT. The segment covering 29 to 40 has biased composition (polar residues); that stretch reads KVQSQDPNPVNG. Residues 57 to 77 traverse the membrane as a helical segment; that stretch reads TLVHLVKGNMGTGILGLPLAV. Topologically, residues 78 to 79 are extracellular; that stretch reads KN. Residues 80–100 form a helical membrane-spanning segment; it reads AGILMGPLSLLVMGLIACHCM. Residues 101 to 146 are Cytoplasmic-facing; sequence HILVRCAQRFCHRLNKPFMDYGDTVMHGLASSPNTWLQSHAHWGRH. A helical transmembrane segment spans residues 147–167; it reads AVSFFLIVTQLGFCCVYIVFL. Topologically, residues 168–195 are extracellular; it reads ADNLKQVVEAVNSTTISCHKNETVVLTP. Residues 196-216 traverse the membrane as a helical segment; that stretch reads TIDSRLYMLAFLPVLGLLVFI. At 217–220 the chain is on the cytoplasmic side; sequence RNLR. The chain crosses the membrane as a helical span at residues 221 to 241; that stretch reads VLTIFSLLANVSMLVSLVIIG. At 242 to 262 the chain is on the extracellular side; sequence QYIIQGIPDPSQLPLVASWKT. The chain crosses the membrane as a helical span at residues 263 to 283; the sequence is YPLFFGTAIFSFESIGVVLPL. The Cytoplasmic portion of the chain corresponds to 284–295; that stretch reads ENKMKDARRFPT. The chain crosses the membrane as a helical span at residues 296–316; it reads ILSLGMSIITTLYIAIGALGY. Residues 317–343 are Extracellular-facing; it reads LRFGDDIKASITLNLPNCWLYQSVKLL. A helical transmembrane segment spans residues 344–364; sequence YVVGILCTHALQFYVPAEIII. The Cytoplasmic segment spans residues 365 to 377; the sequence is PLAVSQVSKRWAL. The chain crosses the membrane as a helical span at residues 378–398; that stretch reads PVDLSIRLALVCVTCMLAILI. Over 399-402 the chain is Extracellular; that stretch reads PRLD. Residues 403-423 traverse the membrane as a helical segment; that stretch reads LVLSLVGSVSSSALALIIPPL. Topologically, residues 424–444 are cytoplasmic; that stretch reads LEVTTYYGEGMSPLTITKDAL. The chain crosses the membrane as a helical span at residues 445 to 465; it reads ISILGFMGFVVGTYQALDELI. The Extracellular segment spans residues 466–481; it reads RSGNSLPLSNSTMFIQ.

It belongs to the amino acid/polyamine transporter 2 family. As to expression, expressed in lung and spleen, and to a lower extent in brain, heart, kidney and skeletal muscle.

The protein localises to the cell membrane. The protein resides in the endoplasmic reticulum membrane. It localises to the recycling endosome membrane. It carries out the reaction glycine(in) + H(+)(in) = glycine(out) + H(+)(out). The catalysed reaction is L-alanine(in) + H(+)(in) = L-alanine(out) + H(+)(out). It catalyses the reaction D-alanine(in) + H(+)(in) = D-alanine(out) + H(+)(out). The enzyme catalyses L-proline(out) + H(+)(out) = L-proline(in) + H(+)(in). It carries out the reaction D-proline(out) + H(+)(out) = D-proline(in) + H(+)(in). The catalysed reaction is 4-hydroxy-L-proline(in) + H(+)(in) = 4-hydroxy-L-proline(out) + H(+)(out). It catalyses the reaction L-serine(in) + H(+)(in) = L-serine(out) + H(+)(out). The enzyme catalyses D-serine(out) + H(+)(out) = D-serine(in) + H(+)(in). It carries out the reaction beta-alanine(in) + H(+)(in) = beta-alanine(out) + H(+)(out). The catalysed reaction is 4-aminobutanoate(in) + H(+)(in) = 4-aminobutanoate(out) + H(+)(out). It catalyses the reaction sarcosine(in) + H(+)(in) = sarcosine(out) + H(+)(out). The enzyme catalyses N,N-dimethylglycine(in) + H(+)(in) = N,N-dimethylglycine(out) + H(+)(out). With respect to regulation, inhibited by L- and D-pipecolic acid, nipecotic acid, isonipecotic acid, L- and D-cycloserine, and L-2-azetidine-carboxylate. Its function is as follows. Electrogenic proton/amino acid symporter with a high selectivity for the small side chains amino acids glycine, alanine and proline, where both L- and D-enantiomers are transported. Extension of the backbone length, as in beta-alanine and 4-aminobutanoate or methylation of the amino group, as in sarcosine and N,N-dimethylglycine, are also tolerated but decrease transport efficiency. A free carboxyl group is preferred. This chain is Proton-coupled amino acid transporter 2, found in Rattus norvegicus (Rat).